The sequence spans 24 residues: Glutathione S-transferase (24 aa).

This sequence belongs to the GST superfamily. In terms of assembly, monomer and homodimer.

The protein resides in the cytoplasm. It carries out the reaction RX + glutathione = an S-substituted glutathione + a halide anion + H(+). Its function is as follows. Conjugation of reduced glutathione to a wide number of exogenous and endogenous hydrophobic electrophiles. The sequence is that of Glutathione S-transferase from Pseudomonas sp. (strain CF600).